The following is a 325-amino-acid chain: Phospholipid phosphatase-related protein type 1 (325 aa).

Asparagine 5 carries N-linked (GlcNAc...) asparagine glycosylation. 3 consecutive transmembrane segments (helical) span residues 13–33 (IIPCFIFVELVIMAGTVLLAY), 67–87 (FISPLVLYCVLAATPTAIIFI), and 127–147 (FIGVFAFGLFATDIFVNAGQV). N-linked (GlcNAc...) asparagine glycosylation is present at asparagine 163. 3 helical membrane-spanning segments follow: residues 201–219 (AALSIYSALYATMYITSTI), 226–244 (LAKPVLCLGDLCTAFLTGL), and 257–277 (VIAGFILGTAVALFLGMCVVH). A Phosphoserine modification is found at serine 307. The N-linked (GlcNAc...) asparagine glycan is linked to asparagine 316.

This sequence belongs to the PA-phosphatase related phosphoesterase family. Highly expressed in the brain. Also found in the liver, kidney and testis. In the brain shows a strongest expression in the hippocampus and cerebellum.

The protein resides in the cell membrane. It is found in the cell projection. The protein localises to the neuron projection. Functionally, may play a role in neurite outgrowth and neurogenesis. This is Phospholipid phosphatase-related protein type 1 from Rattus norvegicus (Rat).